An 88-amino-acid polypeptide reads, in one-letter code: Large ribosomal subunit protein bL27 (88 aa).

A disordered region spans residues 1–26 (MAHKKGTGSTRNGRDSNSKRLGVKAY).

It belongs to the bacterial ribosomal protein bL27 family.

The protein is Large ribosomal subunit protein bL27 of Prochlorococcus marinus (strain MIT 9211).